We begin with the raw amino-acid sequence, 191 residues long: Thymidine kinase (191 aa).

ATP-binding positions include 9–16 (GSMNSGKT) and 85–88 (DESQ). Glutamate 86 (proton acceptor) is an active-site residue. Residues cysteine 143, cysteine 146, cysteine 181, and cysteine 184 each contribute to the Zn(2+) site.

It belongs to the thymidine kinase family. Homotetramer.

The protein localises to the cytoplasm. The enzyme catalyses thymidine + ATP = dTMP + ADP + H(+). This is Thymidine kinase from Listeria monocytogenes serotype 4b (strain F2365).